Consider the following 331-residue polypeptide: ESX-3 secretion system protein EccE3 (331 aa).

The next 2 helical transmembrane spans lie at 11–31 and 37–57; these read GRVT…PWQS and LLGV…GLYF.

The protein belongs to the EccE family. Part of the ESX-3 / type VII secretion system (T7SS), which is composed of cytosolic and membrane components. The ESX-3 membrane complex is composed of EccB3, EccC3, EccD3 and EccE3.

Its subcellular location is the cell inner membrane. Functionally, part of the ESX-3 specialized secretion system, which is important for iron and zinc uptake or homeostasis. This is ESX-3 secretion system protein EccE3 from Mycobacterium tuberculosis (strain CDC 1551 / Oshkosh).